Consider the following 512-residue polypeptide: Glutathione-binding protein GsiB (512 aa).

A signal peptide spans 1–26 (MTQFITHKWLAALGLASSIAAFPALA).

It belongs to the bacterial solute-binding protein 5 family. In terms of assembly, the complex is composed of two ATP-binding proteins (GsiA), two transmembrane proteins (GsiC and GsiD) and a solute-binding protein (GsiB).

The protein localises to the periplasm. Part of the ABC transporter complex GsiABCD involved in glutathione import. Binds glutathione. The protein is Glutathione-binding protein GsiB of Salmonella paratyphi A (strain ATCC 9150 / SARB42).